A 49-amino-acid chain; its full sequence is Large ribosomal subunit protein bL33B (49 aa).

The protein belongs to the bacterial ribosomal protein bL33 family.

Its function is as follows. Plays a role in sporulation at high temperatures. This Bacillus subtilis (strain 168) protein is Large ribosomal subunit protein bL33B (rpmGB).